The sequence spans 509 residues: Photosystem II CP47 reaction center protein (509 aa).

Helical transmembrane passes span 21–36 (AVHLMHTALVAGWAGS), 101–115 (IVLSGMLFLAAIWHW), 140–156 (GIHLLLSSLLCFGFGAF), 203–218 (IAAGTVGILAGVFHLT), 237–252 (VLSSSISAVFFSAFIT), and 457–472 (NFALIFFFGHLWHGSR).

Belongs to the PsbB/PsbC family. PsbB subfamily. As to quaternary structure, PSII is composed of 1 copy each of membrane proteins PsbA, PsbB, PsbC, PsbD, PsbE, PsbF, PsbH, PsbI, PsbJ, PsbK, PsbL, PsbM, PsbT, PsbX, PsbY, PsbZ, Psb30/Ycf12, at least 3 peripheral proteins of the oxygen-evolving complex and a large number of cofactors. It forms dimeric complexes. Requires Binds multiple chlorophylls. PSII binds additional chlorophylls, carotenoids and specific lipids. as cofactor.

The protein localises to the plastid. Its subcellular location is the chloroplast thylakoid membrane. One of the components of the core complex of photosystem II (PSII). It binds chlorophyll and helps catalyze the primary light-induced photochemical processes of PSII. PSII is a light-driven water:plastoquinone oxidoreductase, using light energy to abstract electrons from H(2)O, generating O(2) and a proton gradient subsequently used for ATP formation. This chain is Photosystem II CP47 reaction center protein, found in Porphyra purpurea (Red seaweed).